Consider the following 194-residue polypeptide: Fibroblast growth factor 7 (194 aa).

The N-terminal stretch at 1 to 31 (MRKWILTWILPSLLYRSCFHIICLVGTISLA) is a signal peptide. N-linked (GlcNAc...) asparagine glycosylation occurs at asparagine 45.

It belongs to the heparin-binding growth factors family. Interacts with FGFBP1. Interacts with FGFR2. Affinity between fibroblast growth factors (FGFs) and their receptors is increased by heparan sulfate glycosaminoglycans that function as coreceptors.

The protein resides in the secreted. Its function is as follows. Plays an important role in the regulation of embryonic development, cell proliferation and cell differentiation. Required for normal branching morphogenesis. Growth factor active on keratinocytes. Possible major paracrine effector of normal epithelial cell proliferation. The chain is Fibroblast growth factor 7 (FGF7) from Cervus elaphus (Red deer).